Reading from the N-terminus, the 622-residue chain is Low affinity potassium transport system protein Kup (622 aa).

The next 12 membrane-spanning stretches (helical) occupy residues 9-29 (LPAITLAAIGVVYGDIGTSPL), 49-69 (VFGFLSLIFWLLIFVVSIKYL), 103-123 (VIMGLIGGSFFYGEVVITPAI), 137-157 (PQLDTWIVPLSIIVLTLLFMI), 165-185 (VGKLFAPIMLTWFLILAGLGL), 213-233 (VSFIALGAVVLSITGVEALYA), 247-267 (WFTVVLPSLTLNYFGQGALLL), 276-296 (PFFLLAPDWALIPLLIIAALA), 337-357 (IYIPFVNWMLYVAVVIVIVSF), 363-383 (LAAAYGIAVTGTMVLTSILST), 396-416 (FVALILIAFLCVDIPLFTANL), and 419-439 (LLSGGWLPLSLGTVMFIVMTT).

The protein belongs to the HAK/KUP transporter (TC 2.A.72) family.

The protein localises to the cell inner membrane. The catalysed reaction is K(+)(in) + H(+)(in) = K(+)(out) + H(+)(out). Functionally, responsible for the low-affinity transport of potassium into the cell. Likely operates as a K(+):H(+) symporter. The polypeptide is Low affinity potassium transport system protein Kup (Escherichia fergusonii (strain ATCC 35469 / DSM 13698 / CCUG 18766 / IAM 14443 / JCM 21226 / LMG 7866 / NBRC 102419 / NCTC 12128 / CDC 0568-73)).